A 286-amino-acid chain; its full sequence is Bifunctional protein FolD (286 aa).

Residues 165-167 and Ser190 contribute to the NADP(+) site; that span reads GRS.

This sequence belongs to the tetrahydrofolate dehydrogenase/cyclohydrolase family. In terms of assembly, homodimer.

The enzyme catalyses (6R)-5,10-methylene-5,6,7,8-tetrahydrofolate + NADP(+) = (6R)-5,10-methenyltetrahydrofolate + NADPH. It carries out the reaction (6R)-5,10-methenyltetrahydrofolate + H2O = (6R)-10-formyltetrahydrofolate + H(+). It participates in one-carbon metabolism; tetrahydrofolate interconversion. Its function is as follows. Catalyzes the oxidation of 5,10-methylenetetrahydrofolate to 5,10-methenyltetrahydrofolate and then the hydrolysis of 5,10-methenyltetrahydrofolate to 10-formyltetrahydrofolate. This chain is Bifunctional protein FolD, found in Staphylococcus aureus (strain USA300).